The primary structure comprises 931 residues: Bifunctional glutamine synthetase adenylyltransferase/adenylyl-removing enzyme (931 aa).

Positions Met1 to Pro434 are adenylyl removase. The interval Pro441–Ala931 is adenylyl transferase.

Belongs to the GlnE family. Requires Mg(2+) as cofactor.

It catalyses the reaction [glutamine synthetase]-O(4)-(5'-adenylyl)-L-tyrosine + phosphate = [glutamine synthetase]-L-tyrosine + ADP. The enzyme catalyses [glutamine synthetase]-L-tyrosine + ATP = [glutamine synthetase]-O(4)-(5'-adenylyl)-L-tyrosine + diphosphate. Functionally, involved in the regulation of glutamine synthetase GlnA, a key enzyme in the process to assimilate ammonia. When cellular nitrogen levels are high, the C-terminal adenylyl transferase (AT) inactivates GlnA by covalent transfer of an adenylyl group from ATP to specific tyrosine residue of GlnA, thus reducing its activity. Conversely, when nitrogen levels are low, the N-terminal adenylyl removase (AR) activates GlnA by removing the adenylyl group by phosphorolysis, increasing its activity. The regulatory region of GlnE binds the signal transduction protein PII (GlnB) which indicates the nitrogen status of the cell. This Stenotrophomonas maltophilia (strain K279a) protein is Bifunctional glutamine synthetase adenylyltransferase/adenylyl-removing enzyme.